The chain runs to 346 residues: 4-hydroxy-3-methylbut-2-enyl diphosphate reductase (346 aa).

C19 is a [4Fe-4S] cluster binding site. Residues H48 and H84 each coordinate (2E)-4-hydroxy-3-methylbut-2-enyl diphosphate. Dimethylallyl diphosphate-binding residues include H48 and H84. Residues H48 and H84 each contribute to the isopentenyl diphosphate site. Residue C106 coordinates [4Fe-4S] cluster. Residue H134 participates in (2E)-4-hydroxy-3-methylbut-2-enyl diphosphate binding. H134 serves as a coordination point for dimethylallyl diphosphate. Residue H134 participates in isopentenyl diphosphate binding. E136 acts as the Proton donor in catalysis. T175 is a (2E)-4-hydroxy-3-methylbut-2-enyl diphosphate binding site. C205 contributes to the [4Fe-4S] cluster binding site. (2E)-4-hydroxy-3-methylbut-2-enyl diphosphate-binding residues include S233, S234, N235, and S278. 4 residues coordinate dimethylallyl diphosphate: S233, S234, N235, and S278. 4 residues coordinate isopentenyl diphosphate: S233, S234, N235, and S278.

This sequence belongs to the IspH family. [4Fe-4S] cluster is required as a cofactor.

It carries out the reaction isopentenyl diphosphate + 2 oxidized [2Fe-2S]-[ferredoxin] + H2O = (2E)-4-hydroxy-3-methylbut-2-enyl diphosphate + 2 reduced [2Fe-2S]-[ferredoxin] + 2 H(+). The catalysed reaction is dimethylallyl diphosphate + 2 oxidized [2Fe-2S]-[ferredoxin] + H2O = (2E)-4-hydroxy-3-methylbut-2-enyl diphosphate + 2 reduced [2Fe-2S]-[ferredoxin] + 2 H(+). The protein operates within isoprenoid biosynthesis; dimethylallyl diphosphate biosynthesis; dimethylallyl diphosphate from (2E)-4-hydroxy-3-methylbutenyl diphosphate: step 1/1. It participates in isoprenoid biosynthesis; isopentenyl diphosphate biosynthesis via DXP pathway; isopentenyl diphosphate from 1-deoxy-D-xylulose 5-phosphate: step 6/6. In terms of biological role, catalyzes the conversion of 1-hydroxy-2-methyl-2-(E)-butenyl 4-diphosphate (HMBPP) into a mixture of isopentenyl diphosphate (IPP) and dimethylallyl diphosphate (DMAPP). Acts in the terminal step of the DOXP/MEP pathway for isoprenoid precursor biosynthesis. In Brucella abortus (strain S19), this protein is 4-hydroxy-3-methylbut-2-enyl diphosphate reductase.